The following is a 414-amino-acid chain: Procollagen C-endopeptidase enhancer 2 (414 aa).

Positions 1–22 (MGGASACIPLCLLLATARMARP) are cleaved as a signal peptide. Disulfide bonds link cysteine 32–cysteine 58, cysteine 85–cysteine 106, cysteine 153–cysteine 180, cysteine 207–cysteine 230, cysteine 296–cysteine 363, cysteine 300–cysteine 366, and cysteine 311–cysteine 414. CUB domains lie at 32–143 (CGGI…YSAA) and 153–267 (CGGR…YKFR). One can recognise an NTR domain in the interval 296–414 (CQQKCRRMGT…PMNALKNKQC (119 aa)). Asparagine 354 is a glycosylation site (N-linked (GlcNAc...) asparagine).

Interacts with heparin with high affinity, and type I or II collagen. In terms of processing, O-glycosylated; contains sialic acid.

It localises to the secreted. In terms of biological role, binds to the C-terminal propeptide of types I and II procollagens and may enhance the cleavage of that propeptide by BMP1. In Mus musculus (Mouse), this protein is Procollagen C-endopeptidase enhancer 2 (Pcolce2).